Here is a 212-residue protein sequence, read N- to C-terminus: Ribonuclease HII (212 aa).

The region spanning 17-211 (RVLAGIDEAG…VLELLDLTDS (195 aa)) is the RNase H type-2 domain. Positions 23, 24, and 120 each coordinate a divalent metal cation.

Belongs to the RNase HII family. Mn(2+) is required as a cofactor. It depends on Mg(2+) as a cofactor.

Its subcellular location is the cytoplasm. The enzyme catalyses Endonucleolytic cleavage to 5'-phosphomonoester.. Endonuclease that specifically degrades the RNA of RNA-DNA hybrids. The chain is Ribonuclease HII from Chloroflexus aggregans (strain MD-66 / DSM 9485).